Reading from the N-terminus, the 164-residue chain is FMN reductase (NADH) RutF (164 aa).

Belongs to the non-flavoprotein flavin reductase family. RutF subfamily.

It catalyses the reaction FMNH2 + NAD(+) = FMN + NADH + 2 H(+). Functionally, catalyzes the reduction of FMN to FMNH2 which is used to reduce pyrimidine by RutA via the Rut pathway. The sequence is that of FMN reductase (NADH) RutF from Escherichia coli O45:K1 (strain S88 / ExPEC).